Here is a 105-residue protein sequence, read N- to C-terminus: Large ribosomal subunit protein bL21 (105 aa).

It belongs to the bacterial ribosomal protein bL21 family. As to quaternary structure, part of the 50S ribosomal subunit. Contacts protein L20.

In terms of biological role, this protein binds to 23S rRNA in the presence of protein L20. The chain is Large ribosomal subunit protein bL21 from Rickettsia africae (strain ESF-5).